A 153-amino-acid polypeptide reads, in one-letter code: Prostaglandin E synthase (153 aa).

Residues 1 to 13 (MPSPGLVMESGQV) are Lumenal-facing. The chain crosses the membrane as a helical span at residues 14–42 (LPAFLLCSTLLVIKMYAVAVITGQMRLRK). R39 contacts glutathione. Over 43 to 61 (KAFANPEDALKRGGLQYYR) the chain is Cytoplasmic. A helical transmembrane segment spans residues 62 to 91 (SDPDVERCLRAHRNDMETIYPFLFLGFVYS). 74 to 78 (RNDME) contacts glutathione. Over 92–96 (FLGPN) the chain is Lumenal. A helical membrane pass occupies residues 97-120 (PLIAWIHFLVVLTGRVVHTVAYLG). Residues H114 and Y118 each coordinate glutathione. Topologically, residues 121–124 (KLNP) are cytoplasmic. Residues 125 to 153 (RLRSGAYVLAQFSCFSMALQILWEVAHHL) form a helical membrane-spanning segment. Glutathione is bound at residue 127–131 (RSGAY).

It belongs to the MAPEG family. Homotrimer. It depends on glutathione as a cofactor.

The protein resides in the membrane. It localises to the cytoplasm. The protein localises to the perinuclear region. The enzyme catalyses prostaglandin H2 = prostaglandin E2. The catalysed reaction is 2-glyceryl-prostaglandin H2 = 2-glyceryl-prostaglandin E2. It carries out the reaction prostaglandin G2 = (15S)-15-hydroperoxy-prostaglandin E2. It catalyses the reaction 1-chloro-2,4-dinitrobenzene + glutathione = 2,4-dinitrophenyl-S-glutathione + chloride + H(+). The enzyme catalyses (5S)-hydroperoxy-(6E,8Z,11Z,14Z)-eicosatetraenoate + 2 glutathione = (5S)-hydroxy-(6E,8Z,11Z,14Z)-eicosatetraenoate + glutathione disulfide + H2O. The protein operates within lipid metabolism; prostaglandin biosynthesis. Its activity is regulated as follows. Activity is increased markedly in macrophages and osteoblasts following pro-inflammatory stimuli. Terminal enzyme of the cyclooxygenase (COX)-2-mediated prostaglandin E2 (PGE2) biosynthetic pathway. Catalyzes the glutathione-dependent oxidoreduction of prostaglandin endoperoxide H2 (PGH2) to prostaglandin E2 (PGE2) in response to inflammatory stimuli. Plays a key role in inflammation response, fever and pain. Also catalyzes the oxidoreduction of endocannabinoids into prostaglandin glycerol esters and PGG2 into 15-hydroperoxy-PGE2. In addition, displays low glutathione transferase and glutathione-dependent peroxidase activities, toward 1-chloro-2,4-dinitrobenzene and 5-hydroperoxyicosatetraenoic acid (5-HPETE), respectively. The polypeptide is Prostaglandin E synthase (Ptges) (Mus musculus (Mouse)).